The sequence spans 67 residues: MKKTCVVSVFLVLLLLKFHDLSMGEEISPLKKVARREDNLVLSCAEFPCPEGYICDTASQKCRPGTD.

A signal peptide spans 1–24; the sequence is MKKTCVVSVFLVLLLLKFHDLSMG. A propeptide spanning residues 25–36 is cleaved from the precursor; it reads EEISPLKKVARR. Intrachain disulfides connect Cys44–Cys55 and Cys49–Cys62.

In terms of tissue distribution, expressed by the venom gland.

The protein resides in the secreted. The polypeptide is Kappa-scoloptoxin(04)-Ssd1b (Scolopendra dehaani (Thai centipede)).